The chain runs to 757 residues: Dolichyl-diphosphooligosaccharide--protein glycosyltransferase subunit stt-3 (757 aa).

Residues 1-13 (MTSTTAARTASSR) lie on the Cytoplasmic side of the membrane. The chain crosses the membrane as a helical span at residues 14-34 (VGATTLLTIVVLALAWFVGFA). The Lumenal portion of the chain corresponds to 35–121 (SRLFAIVRFE…VHIREVCVFL (87 aa)). The short motif at 49–51 (EFD) is the DXD motif 1 element. Aspartate 51 is a Mn(2+) binding site. A helical transmembrane segment spans residues 122-140 (APTFSGLTAIATYLLTKEL). Residues 141-142 (WS) lie on the Cytoplasmic side of the membrane. A helical membrane pass occupies residues 143 to 160 (PGAGLFAACFIAISPGYT). The Lumenal portion of the chain corresponds to 161–171 (SRSVAGSYDNE). 2 residues coordinate Mn(2+): aspartate 169 and glutamate 171. The DXD motif 2 motif lies at 169 to 171 (DNE). The helical transmembrane segment at 172–191 (GIAIFALQFTYYLWVKSLKT) threads the bilayer. Topologically, residues 192–193 (GS) are cytoplasmic. Residues 194 to 208 (IMWASLCALSYFYMV) form a helical membrane-spanning segment. The Lumenal segment spans residues 209 to 210 (SA). 2 helical membrane-spanning segments follow: residues 211-235 (WGGY…GRYS) and 236-261 (SRLF…FVGF). Residues 262-269 (QPVRTSEH) are Lumenal-facing. A helical membrane pass occupies residues 270–289 (MPAFGVFGLLQIVALMHYAR). At 290–299 (NRITRQQFMT) the chain is on the cytoplasmic side. The helical transmembrane segment at 300–320 (LFVGGLTILGALSVVVYFALV) threads the bilayer. At 321 to 358 (WGGYVAPFSGRFYSLWDTGYAKIHIPIIASVSEHQPTT) the chain is on the lumenal side. The SVSE motif signature appears at 350–353 (SVSE). Residues 359–381 (WVSFFFDLHITAAVFPVGLWYCI) traverse the membrane as a helical segment. The Cytoplasmic segment spans residues 382–387 (KKVNDE). Residues 388–404 (RVFIILYAVSAVYFAGV) form a helical membrane-spanning segment. The Lumenal segment spans residues 405-408 (MVRL). Dolichyl diphosphooligosaccharide is bound at residue arginine 407. A helical transmembrane segment spans residues 409–430 (MLTLTPAVCVLAGIGFSYTFEK). The Cytoplasmic segment spans residues 431-469 (YLKDEETKERSSSQSGTTKDEKLYDKAAKNVKSRNANDG). A helical transmembrane segment spans residues 470–495 (DESGVSSNVRTIISIILVIFLLMFVV). Residues 496–757 (HATYVTSNAY…IRPAPTASKA (262 aa)) lie on the Lumenal side of the membrane. The segment at 547–549 (WWD) is interacts with target acceptor peptide in protein substrate. The WWDYG motif motif lies at 547–551 (WWDYG). Residue tyrosine 552 coordinates dolichyl diphosphooligosaccharide. Residues asparagine 559 and asparagine 566 are each glycosylated (N-linked (GlcNAc...) asparagine). Asparagine 570 carries an N-linked (GlcNAc...) (high mannose) asparagine glycan. A glycan (N-linked (GlcNAc...) asparagine) is linked at asparagine 584. The DK motif signature appears at 614 to 621 (DINKFLWM). The disordered stretch occupies residues 721 to 757 (RPTVKSEEATIPIKGKKATQGKNKKGVIRPAPTASKA). The span at 734 to 747 (KGKKATQGKNKKGV) shows a compositional bias: basic residues.

This sequence belongs to the STT3 family. Component of the oligosaccharyltransferase (OST) complex. Requires Mg(2+) as cofactor. Mn(2+) serves as cofactor.

It localises to the endoplasmic reticulum membrane. It carries out the reaction a di-trans,poly-cis-dolichyl diphosphooligosaccharide + L-asparaginyl-[protein] = N(4)-(oligosaccharide-(1-&gt;4)-N-acetyl-beta-D-glucosaminyl-(1-&gt;4)-N-acetyl-beta-D-glucosaminyl)-L-asparaginyl-[protein] + a di-trans,poly-cis-dolichyl diphosphate + H(+). Its pathway is protein modification; protein glycosylation. Functionally, catalytic subunit of the oligosaccharyl transferase (OST) complex that catalyzes the initial transfer of a defined glycan (Glc(3)Man(9)GlcNAc(2) in eukaryotes) from the lipid carrier dolichol-pyrophosphate to an asparagine residue within an Asn-X-Ser/Thr consensus motif in nascent polypeptide chains, the first step in protein N-glycosylation. N-glycosylation occurs cotranslationally and the complex associates with the Sec61 complex at the channel-forming translocon complex that mediates protein translocation across the endoplasmic reticulum (ER). All subunits are required for a maximal enzyme activity. This subunit contains the active site and the acceptor peptide and donor lipid-linked oligosaccharide (LLO) binding pockets. The sequence is that of Dolichyl-diphosphooligosaccharide--protein glycosyltransferase subunit stt-3 from Caenorhabditis elegans.